The chain runs to 601 residues: Elongation factor 4 (601 aa).

The tr-type G domain maps to 6-188 (SHIRNFSIIA…QIVHRVPPPE (183 aa)). GTP-binding positions include 18-23 (DHGKST) and 135-138 (NKID).

This sequence belongs to the TRAFAC class translation factor GTPase superfamily. Classic translation factor GTPase family. LepA subfamily.

It is found in the cell inner membrane. The catalysed reaction is GTP + H2O = GDP + phosphate + H(+). In terms of biological role, required for accurate and efficient protein synthesis under certain stress conditions. May act as a fidelity factor of the translation reaction, by catalyzing a one-codon backward translocation of tRNAs on improperly translocated ribosomes. Back-translocation proceeds from a post-translocation (POST) complex to a pre-translocation (PRE) complex, thus giving elongation factor G a second chance to translocate the tRNAs correctly. Binds to ribosomes in a GTP-dependent manner. In Anaeromyxobacter dehalogenans (strain 2CP-C), this protein is Elongation factor 4.